An 878-amino-acid chain; its full sequence is Splicing factor 3B subunit 2 (878 aa).

A compositionally biased stretch (basic and acidic residues) spans 1-10 (MAAEHPEPPK). Disordered stretches follow at residues 1-25 (MAAE…GHYG) and 67-136 (RPVL…LRVG). Residue K10 forms a Glycyl lysine isopeptide (Lys-Gly) (interchain with G-Cter in SUMO2) linkage. In terms of domain architecture, SAP spans 24-58 (YGAWAAQELQARLAEIGAPIQGSREELVERLQTYT). 2 stretches are compositionally biased toward pro residues: residues 91-114 (PMPP…PPPG) and 122-133 (AHPPNLGPPPPL). Residues 140–177 (ALSEEERLKLAQQQAALLMQQEERAKQAAVLMEQERQQ) adopt a coiled-coil conformation. Disordered stretches follow at residues 183 to 356 (GTAV…EYVT) and 383 to 436 (KKEK…SKKK). Positions 201 to 221 (PLGPRVAAPVGPVVPTPTVLP) are enriched in low complexity. An omega-N-methylarginine mark is found at R205, R228, and R230. Positions 224–237 (APVPRPRGPPPPPG) are enriched in pro residues. K258 is subject to N6-acetyllysine. Over residues 260–269 (LQLKESRQEE) the composition is skewed to basic and acidic residues. Residue K263 forms a Glycyl lysine isopeptide (Lys-Gly) (interchain with G-Cter in SUMO2) linkage. S272 is subject to Phosphoserine. T281 bears the Phosphothreonine mark. Phosphoserine is present on residues S290 and S292. At T294 the chain carries Phosphothreonine. S300 is modified (phosphoserine). Residues 305-321 (EKNRKRRNRKKKKKPQR) show a composition bias toward basic residues. Residues 330 to 342 (SGDREKDSGRSRG) show a composition bias toward basic and acidic residues. S343 is subject to Phosphoserine. Residues K383 and K395 each participate in a glycyl lysine isopeptide (Lys-Gly) (interchain with G-Cter in SUMO2) cross-link. Basic and acidic residues-rich tracts occupy residues 383 to 397 (KKEK…DKME) and 405 to 414 (KGFEEEHKDS). Positions 384–533 (KEKEKEPEKL…QEKEEQKTMK (150 aa)) are required for interaction with PRMT9. Phosphoserine occurs at positions 414, 418, and 419. A Glycyl lysine isopeptide (Lys-Gly) (interchain with G-Cter in SUMO2) cross-link involves residue K475. R491 and R498 each carry omega-N-methylarginine. Position 491 is a symmetric dimethylarginine (R491). Residue K526 forms a Glycyl lysine isopeptide (Lys-Gly) (interchain with G-Cter in SUMO2) linkage. The interval 674–740 (AAEFQTKTEE…PGGFSSVPAG (67 aa)) is disordered. Residues 695–715 (EPSDEESSEEEEEEESDEDKP) are compositionally biased toward acidic residues. Residue K753 forms a Glycyl lysine isopeptide (Lys-Gly) (interchain with G-Cter in SUMO2) linkage. T763 carries the phosphothreonine modification. Residues K773, K826, and K840 each participate in a glycyl lysine isopeptide (Lys-Gly) (interchain with G-Cter in SUMO2) cross-link. Residues 827-852 (YEEHVREQQAQVEKEDFSDMVAEHAA) show a composition bias toward basic and acidic residues. Residues 827–878 (YEEHVREQQAQVEKEDFSDMVAEHAAKQKQKKRKAQPQDSRGGSKKYKEFKF) form a disordered region. S844 is subject to Phosphoserine.

Component of the 17S U2 SnRNP complex, a ribonucleoprotein complex that contains small nuclear RNA (snRNA) U2 and a number of specific proteins. Part of the SF3B subcomplex of the 17S U2 SnRNP complex. SF3B associates with the splicing subcomplex SF3A and a 12S RNA unit to form the U2 small nuclear ribonucleoproteins complex (U2 snRNP). Within the SF3B complex, interacts directly with SF3B4. Found in a complex with PRMT9, SF3B2 and SF3B4. Interacts (Arg-491-methylated form) with SMN1 (via Tudor domain). Interacts with RBM7. Interacts with ERCC6. Component of the minor spliceosome. Within this complex, interacts with SCNM1 and CRIPT. Methylation at Arg-491 by PRMT9 is required for the interaction with SMN1.

It localises to the nucleus. Its subcellular location is the nucleus speckle. In terms of biological role, component of the 17S U2 SnRNP complex of the spliceosome, a large ribonucleoprotein complex that removes introns from transcribed pre-mRNAs. The 17S U2 SnRNP complex (1) directly participates in early spliceosome assembly and (2) mediates recognition of the intron branch site during pre-mRNA splicing by promoting the selection of the pre-mRNA branch-site adenosine, the nucleophile for the first step of splicing. Within the 17S U2 SnRNP complex, SF3B2 is part of the SF3B subcomplex, which is required for 'A' complex assembly formed by the stable binding of U2 snRNP to the branchpoint sequence in pre-mRNA. Sequence independent binding of SF3A and SF3B subcomplexes upstream of the branch site is essential, it may anchor U2 snRNP to the pre-mRNA. May also be involved in the assembly of the 'E' complex. Also acts as a component of the minor spliceosome, which is involved in the splicing of U12-type introns in pre-mRNAs. In Mus musculus (Mouse), this protein is Splicing factor 3B subunit 2.